A 340-amino-acid chain; its full sequence is Ketol-acid reductoisomerase (NADP(+)) (340 aa).

Positions 3–182 (VQMEYEKDVK…GAARVGLLET (180 aa)) constitute a KARI N-terminal Rossmann domain. NADP(+) contacts are provided by residues 26–29 (YGSQ), Arg49, Ser53, and 83–86 (DEIQ). His108 is a catalytic residue. Gly134 contacts NADP(+). In terms of domain architecture, KARI C-terminal knotted spans 183–328 (TYKEETEEDL…AELRKAMPFV (146 aa)). 4 residues coordinate Mg(2+): Asp191, Glu195, Glu227, and Glu231. Ser252 lines the substrate pocket.

This sequence belongs to the ketol-acid reductoisomerase family. Mg(2+) serves as cofactor.

The catalysed reaction is (2R)-2,3-dihydroxy-3-methylbutanoate + NADP(+) = (2S)-2-acetolactate + NADPH + H(+). It carries out the reaction (2R,3R)-2,3-dihydroxy-3-methylpentanoate + NADP(+) = (S)-2-ethyl-2-hydroxy-3-oxobutanoate + NADPH + H(+). It functions in the pathway amino-acid biosynthesis; L-isoleucine biosynthesis; L-isoleucine from 2-oxobutanoate: step 2/4. Its pathway is amino-acid biosynthesis; L-valine biosynthesis; L-valine from pyruvate: step 2/4. In terms of biological role, involved in the biosynthesis of branched-chain amino acids (BCAA). Catalyzes an alkyl-migration followed by a ketol-acid reduction of (S)-2-acetolactate (S2AL) to yield (R)-2,3-dihydroxy-isovalerate. In the isomerase reaction, S2AL is rearranged via a Mg-dependent methyl migration to produce 3-hydroxy-3-methyl-2-ketobutyrate (HMKB). In the reductase reaction, this 2-ketoacid undergoes a metal-dependent reduction by NADPH to yield (R)-2,3-dihydroxy-isovalerate. The sequence is that of Ketol-acid reductoisomerase (NADP(+)) from Streptococcus thermophilus (strain CNRZ 1066).